Consider the following 307-residue polypeptide: Probable inactive peptidyl-prolyl cis-trans isomerase-like 6 (307 aa).

The PPIase cyclophilin-type domain maps to 141-304 (FLDISIDLYP…QNCVITASGQ (164 aa)).

This sequence belongs to the cyclophilin-type PPIase family.

Its function is as follows. Probable inactive PPIase with no peptidyl-prolyl cis-trans isomerase activity. This chain is Probable inactive peptidyl-prolyl cis-trans isomerase-like 6, found in Bos taurus (Bovine).